The sequence spans 123 residues: MPTINQLVRKGRTPQKVKSKVPAMDANPQKRGVCTRVYTTTPKKPNSALRKVAKVRLTNAREVITYIPGEGHNLQEHSVVLIRGGRVRDLPGVRYHVLRGVLDTQGVKDRKQSRSKYGAKRPK.

Positions 1 to 24 are disordered; that stretch reads MPTINQLVRKGRTPQKVKSKVPAM. Residues 9–19 are compositionally biased toward basic residues; that stretch reads RKGRTPQKVKS. At Asp89 the chain carries 3-methylthioaspartic acid.

Belongs to the universal ribosomal protein uS12 family. In terms of assembly, part of the 30S ribosomal subunit. Contacts proteins S8 and S17. May interact with IF1 in the 30S initiation complex.

With S4 and S5 plays an important role in translational accuracy. Its function is as follows. Interacts with and stabilizes bases of the 16S rRNA that are involved in tRNA selection in the A site and with the mRNA backbone. Located at the interface of the 30S and 50S subunits, it traverses the body of the 30S subunit contacting proteins on the other side and probably holding the rRNA structure together. The combined cluster of proteins S8, S12 and S17 appears to hold together the shoulder and platform of the 30S subunit. This chain is Small ribosomal subunit protein uS12, found in Sphingopyxis alaskensis (strain DSM 13593 / LMG 18877 / RB2256) (Sphingomonas alaskensis).